Consider the following 244-residue polypeptide: 5-oxoprolinase subunit A (244 aa).

The protein belongs to the LamB/PxpA family. Forms a complex composed of PxpA, PxpB and PxpC.

It catalyses the reaction 5-oxo-L-proline + ATP + 2 H2O = L-glutamate + ADP + phosphate + H(+). Its function is as follows. Catalyzes the cleavage of 5-oxoproline to form L-glutamate coupled to the hydrolysis of ATP to ADP and inorganic phosphate. This is 5-oxoprolinase subunit A from Salmonella dublin (strain CT_02021853).